A 387-amino-acid chain; its full sequence is ADP,ATP carrier protein 2, mitochondrial (387 aa).

Residues 1 to 77 constitute a mitochondrion transit peptide; sequence MADQANQPTV…PVMPTPLFAN (77 aa). Solcar repeat units follow at residues 85–178, 190–282, and 290–376; these read KNFM…FKRL, KWFA…IKPV, and DNFF…LQIL. A run of 5 helical transmembrane segments spans residues 87 to 114, 155 to 179, 188 to 208, 258 to 279, and 293 to 313; these read FMID…VKLL, TANV…KRLF, YWKW…SSLF, FNIS…YDSI, and FASF…SYPI. 2 residues coordinate ADP: Arg-160 and Lys-172. Arg-317 lines the ADP pocket. Residues 317 to 322 are important for transport activity; that stretch reads RRRMMM. The Nucleotide carrier signature motif signature appears at 317–322; the sequence is RRRMMM. The helical transmembrane segment at 353 to 373 threads the bilayer; the sequence is AGANILRAIAGAGVLSGYDQL.

The protein belongs to the mitochondrial carrier (TC 2.A.29) family. In terms of assembly, monomer.

It localises to the mitochondrion inner membrane. The enzyme catalyses ADP(in) + ATP(out) = ADP(out) + ATP(in). Its activity is regulated as follows. The matrix-open state (m-state) is inhibited by the membrane-permeable bongkrekic acid (BKA). The cytoplasmic-open state (c-state) is inhibited by the membrane-impermeable toxic inhibitor carboxyatractyloside (CATR). Functionally, ADP:ATP antiporter that mediates import of ADP into the mitochondrial matrix for ATP synthesis, and export of ATP out to fuel the cell. Cycles between the cytoplasmic-open state (c-state) and the matrix-open state (m-state): operates by the alternating access mechanism with a single substrate-binding site intermittently exposed to either the cytosolic (c-state) or matrix (m-state) side of the inner mitochondrial membrane. The sequence is that of ADP,ATP carrier protein 2, mitochondrial (ANT2) from Zea mays (Maize).